A 393-amino-acid chain; its full sequence is Na(+)/H(+) antiporter NhaA (393 aa).

The next 12 membrane-spanning stretches (helical) occupy residues 23 to 43, 58 to 78, 96 to 116, 126 to 146, 155 to 175, 178 to 198, 201 to 221, 224 to 244, 265 to 285, 298 to 318, 334 to 354, and 367 to 387; these read AGGI…NSPF, LSLA…LVGL, MLPG…FAVL, GWAV…SLLG, VFLA…IAIF, AEIS…LFVM, MGVV…FFVF, GVHA…KPAP, VAFI…FKGL, ILLG…WLAI, LYGV…IGLL, and IGVL…LRAA.

The protein belongs to the NhaA Na(+)/H(+) (TC 2.A.33) antiporter family.

Its subcellular location is the cell inner membrane. The enzyme catalyses Na(+)(in) + 2 H(+)(out) = Na(+)(out) + 2 H(+)(in). Functionally, na(+)/H(+) antiporter that extrudes sodium in exchange for external protons. In Brucella canis (strain ATCC 23365 / NCTC 10854 / RM-666), this protein is Na(+)/H(+) antiporter NhaA.